Here is a 184-residue protein sequence, read N- to C-terminus: Envelope protein 169 (184 aa).

Residues 1–6 (MKKYIK) lie on the Intravirion side of the membrane. The helical transmembrane segment at 7–27 (MYLVLLIAIILFITILVIFLI) threads the bilayer. Topologically, residues 28–184 (SGLFYPEQNP…TVMAIPRKVL (157 aa)) are virion surface.

It belongs to the asfivirus envelope protein p22 family.

It is found in the virion membrane. The protein localises to the host cell membrane. The chain is Envelope protein 169 from Ornithodoros (relapsing fever ticks).